Here is a 425-residue protein sequence, read N- to C-terminus: SWI/SNF and RSC complexes subunit ssr3 (425 aa).

Positions 1 to 16 (MSNNSRLPENGVQSGN) are enriched in polar residues. Positions 1-23 (MSNNSRLPENGVQSGNGEDAELK) are disordered. Residues 201 to 278 (EHPERYKLSK…PELMNRFLEP (78 aa)) enclose the SWIB/MDM2 domain.

This sequence belongs to the SMARCD family. In terms of assembly, component of the RSC complex composed of at least arp9, arp42, rsc1, rsc4, rsc7, rsc9, rsc58, sfh1, snf21, ssr1, ssr2, ssr3 and ssr4. The complex interacts with histone and histone variant components of centromeric chromatin. Component of the SWI/SNF global transcription activator complex composed of at least arp9, arp42, snf5, snf22, snf30, sbf59, sol1, ssr1, ssr2, ssr3, ssr4 and tfg3.

It is found in the cytoplasm. Its subcellular location is the nucleus. In terms of biological role, component of the chromatin structure remodeling complex (RSC), which is involved in transcription regulation and nucleosome positioning. Controls particularly membrane and organelle development genes. Part of the SWI/SNF complex, an ATP-dependent chromatin remodeling complex, required for the positive and negative regulation of gene expression of a large number of genes. It changes chromatin structure by altering DNA-histone contacts within a nucleosome, leading eventually to a change in nucleosome position, thus facilitating or repressing binding of gene-specific transcription factors. The protein is SWI/SNF and RSC complexes subunit ssr3 (ssr3) of Schizosaccharomyces pombe (strain 972 / ATCC 24843) (Fission yeast).